We begin with the raw amino-acid sequence, 572 residues long: Glutathione hydrolase 5 proenzyme (572 aa).

Over 1 to 6 (MAWGHR) the chain is Cytoplasmic. Residues 7 to 29 (TTVCLVLLGVSLGLAIIVLAVVL) traverse the membrane as a helical; Signal-anchor for type II membrane protein segment. The Extracellular portion of the chain corresponds to 30–572 (PHHQASCRPD…LRKAGKASGY (543 aa)). Asn-98 is a glycosylation site (N-linked (GlcNAc...) asparagine). Residue Arg-110 coordinates L-glutamate. Residues Asn-185, Asn-194, Asn-204, Asn-277, Asn-303, Asn-347, and Asn-377 are each glycosylated (N-linked (GlcNAc...) asparagine). The active-site Nucleophile is Thr-388. Residues Thr-406, Glu-427, and 453 to 454 (SS) contribute to the L-glutamate site.

This sequence belongs to the gamma-glutamyltransferase family. In terms of assembly, heterodimer composed of the light and heavy chains. The active site is located in the light chain. Post-translationally, cleaved by autocatalysis into a large and a small subunit. In terms of processing, glycosylated. Widely expressed, but at low level, except in the airway epithelial cells. Detected in brain, heart, kidney, liver, lung, spleen, testis and trachea.

Its subcellular location is the membrane. The enzyme catalyses glutathione + H2O = L-cysteinylglycine + L-glutamate. It catalyses the reaction an S-substituted glutathione + H2O = an S-substituted L-cysteinylglycine + L-glutamate. The catalysed reaction is leukotriene C4 + H2O = leukotriene D4 + L-glutamate. It carries out the reaction S-[(2E,6E,10E)-geranylgeranyl]-L-glutathione + H2O = S-[(2E,6E,10E)-geranylgeranyl]-L-cysteinylglycine + L-glutamate. The enzyme catalyses an N-terminal (5-L-glutamyl)-[peptide] + an alpha-amino acid = 5-L-glutamyl amino acid + an N-terminal L-alpha-aminoacyl-[peptide]. It participates in lipid metabolism; leukotriene D4 biosynthesis. It functions in the pathway sulfur metabolism; glutathione metabolism. Its activity is regulated as follows. Inhibited by serine-borate. Functionally, cleaves the gamma-glutamyl bond of extracellular glutathione tripeptide (gamma-Glu-Cys-Gly) and certain glutathione conjugates. Hydrolyzes glutathione releasing L-Glu and Cys-Gly dipeptide which is further metabolized to maintain extracellular cysteine levels but also to provide cysteine necessary for intracellular glutathione synthesis. Among glutathione-S-conjugates metabolizes leukotriene C4 (LTC4) and S-geranylgeranyl-glutathione (GGG), but is inactive toward gamma-glutamyl leucine. Converts extracellular LTC4 to LTD4 during acute inflammatory response. Acts as a negative regulator of GGG bioactivity. GGT5 (via GGG catabolism) and ABCC1 (via extracellular transport) establish GGG gradients within lymphoid tissues to position P2RY8-positive lymphocytes at germinal centers in lymphoid follicles and restrict their chemotactic transmigration from blood vessels to bone marrow parenchyma. The transpeptidation reaction, i.e. the transfer of gamma-glutamyl moiety to an acceptor molecule to yield a new gamma-glutamyl compound requires high concentration of dipeptide acceptor and is considered nonphysiological. The chain is Glutathione hydrolase 5 proenzyme (Ggt5) from Rattus norvegicus (Rat).